The chain runs to 223 residues: Uridylate kinase (223 aa).

9 to 10 (GS) contributes to the ATP binding site. G42 provides a ligand contact to UMP. G43 and R47 together coordinate ATP. UMP contacts are provided by residues D64 and 112–118 (VSPGQTT). ATP contacts are provided by T138, Y144, and D147.

This sequence belongs to the UMP kinase family. In terms of assembly, homohexamer.

Its subcellular location is the cytoplasm. It catalyses the reaction UMP + ATP = UDP + ADP. Its pathway is pyrimidine metabolism; CTP biosynthesis via de novo pathway; UDP from UMP (UMPK route): step 1/1. Inhibited by UTP. Catalyzes the reversible phosphorylation of UMP to UDP. In Methanothrix thermoacetophila (strain DSM 6194 / JCM 14653 / NBRC 101360 / PT) (Methanosaeta thermophila), this protein is Uridylate kinase.